The following is a 403-amino-acid chain: Phosphoglycerate kinase (403 aa).

Substrate-binding positions include 22–24, R37, 60–63, R119, and R156; these read DLN and HLGR. ATP is bound by residues K206, G302, E333, and 359–362; that span reads GGDS.

It belongs to the phosphoglycerate kinase family. Monomer.

Its subcellular location is the cytoplasm. The enzyme catalyses (2R)-3-phosphoglycerate + ATP = (2R)-3-phospho-glyceroyl phosphate + ADP. The protein operates within carbohydrate degradation; glycolysis; pyruvate from D-glyceraldehyde 3-phosphate: step 2/5. The polypeptide is Phosphoglycerate kinase (Streptomyces griseus subsp. griseus (strain JCM 4626 / CBS 651.72 / NBRC 13350 / KCC S-0626 / ISP 5235)).